The sequence spans 230 residues: Large ribosomal subunit protein uL1 (230 aa).

Belongs to the universal ribosomal protein uL1 family. In terms of assembly, part of the 50S ribosomal subunit.

In terms of biological role, binds directly to 23S rRNA. The L1 stalk is quite mobile in the ribosome, and is involved in E site tRNA release. Its function is as follows. Protein L1 is also a translational repressor protein, it controls the translation of the L11 operon by binding to its mRNA. This chain is Large ribosomal subunit protein uL1, found in Acholeplasma laidlawii (strain PG-8A).